A 205-amino-acid polypeptide reads, in one-letter code: Ribosome maturation factor RimP (205 aa).

The span at 1 to 13 shows a compositional bias: polar residues; it reads MSNAEATTSSDRT. A disordered region spans residues 1 to 27; the sequence is MSNAEATTSSDRTGTGKAEAESVHNPE. The segment covering 18 to 27 has biased composition (basic and acidic residues); sequence AEAESVHNPE.

Belongs to the RimP family.

The protein localises to the cytoplasm. Required for maturation of 30S ribosomal subunits. The protein is Ribosome maturation factor RimP of Arthrobacter sp. (strain FB24).